Here is a 38-residue protein sequence, read N- to C-terminus: Natriuretic peptide DNP (38 aa).

Cys7 and Cys23 are joined by a disulfide. Positions 19-38 (SNLGCPSLRDPRPNAPSTSA) are disordered.

The protein belongs to the natriuretic peptide family. Expressed by the venom gland.

Its subcellular location is the secreted. Functionally, exhibits vasodilator, natriuretic and diuretic properties in animal models and human tissues. Acts by stimulating cGMP via the natriuretic peptide receptor 1 (NPR1). Is a poor agonist of the atrial natriuretic peptide receptor 2 (NPR2). Is not degraded by neutral endopeptidase (NEP/MME). Binds to atrial natriuretic peptide clearance receptor (NPR-C/NPR3), which may be responsible of the removal of DNP from the circulation. Increases calcium uptake and induces histamine release from rat peritoneal mast cells. Increases calcium-activated potassium (KCa) current in gastric antral circular smooth muscle cells by increasing cGMP production and activating inositol trisphosphate receptors (IP3Rs). In vivo, reduces both systolic and diastolic blood pressure with no effect on heart rate, when intravenously injected in conscious rabbits. This is Natriuretic peptide DNP from Dendroaspis angusticeps (Eastern green mamba).